We begin with the raw amino-acid sequence, 176 residues long: MSSDPVPSSFEGNPQFEEETSLQKFRRRLKEEPLIPLGCAATSYALYRAYRSMKAGDSVEMNRMFRARIYAQFFTLIAVVVGGMYFKTERQQRKEFERMVEERKSQEKRDAWLRELEIRDKEDKDWRQRHAAMEAAAAEAGKKTAPHDAARSAIERSEEKSIGVLDAVKELLSRRN.

Residues 6–97 form the HIG1 domain; that stretch reads VPSSFEGNPQ…TERQQRKEFE (92 aa). Transmembrane regions (helical) follow at residues 33-49 and 69-86; these read PLIP…LYRA and IYAQ…GMYF. The segment at 129 to 158 is disordered; it reads RHAAMEAAAAEAGKKTAPHDAARSAIERSE. The span at 140–158 shows a compositional bias: basic and acidic residues; that stretch reads AGKKTAPHDAARSAIERSE.

Belongs to the RCF1 family. In terms of assembly, associates with the respiratory chain complex III/complex IV supercomplex.

Its subcellular location is the mitochondrion membrane. Functionally, cytochrome c oxidase subunit which plays a role in assembly of respiratory supercomplexes. This is Respiratory supercomplex factor 1, mitochondrial (rcf1) from Aspergillus flavus (strain ATCC 200026 / FGSC A1120 / IAM 13836 / NRRL 3357 / JCM 12722 / SRRC 167).